Consider the following 489-residue polypeptide: Dipeptide and tripeptide permease B (489 aa).

At 1–27 the chain is on the cytoplasmic side; the sequence is MNTTTPMGMLQQPRPFFMIFFVELWER. The helical transmembrane segment at 28-48 threads the bilayer; that stretch reads FGYYGVQGVLAVFFVKQLGFS. The Periplasmic portion of the chain corresponds to 49 to 52; the sequence is QEQA. The helical transmembrane segment at 53–73 threads the bilayer; it reads FVTFGAFAALVYGLISIGGYV. At 74 to 82 the chain is on the cytoplasmic side; it reads GDHLLGTKR. The helical transmembrane segment at 83-103 threads the bilayer; the sequence is TIVLGALVLAIGYFMTGLSLL. The Periplasmic portion of the chain corresponds to 104–106; it reads KPD. A helical transmembrane segment spans residues 107–127; it reads LIFIALGTIAVGNGLFKANPA. Residues 128 to 146 are Cytoplasmic-facing; it reads SLLSKCYPPKAPRLDGAFT. A helical membrane pass occupies residues 147-167; sequence LFYMSINIGSLIALSLAPVIA. Residues 168–172 are Periplasmic-facing; sequence DRFGY. Residues 173–193 form a helical membrane-spanning segment; the sequence is SVTYNLCGAGLIIALLVYIAC. Over 194–210 the chain is Cytoplasmic; the sequence is RGMVKDIGSEPDFRPMS. Residues 211–231 traverse the membrane as a helical segment; that stretch reads FSKLLYVLLGSVVMIFVCAWL. Residues 232–233 are Periplasmic-facing; that stretch reads MH. Residues 234–254 form a helical membrane-spanning segment; it reads NVEVANLVLIVLSIVVTIIFF. Over 255–267 the chain is Cytoplasmic; sequence RQAFKLDKTGRNK. A helical membrane pass occupies residues 268–288; the sequence is MFVAFVLMLEAVVFYILYAQM. Topologically, residues 289-311 are periplasmic; sequence PTSLNFFAINNVHHEILGFSINP. The chain crosses the membrane as a helical span at residues 312–332; sequence VSFQALNPFWVVLASPILAGI. The Cytoplasmic segment spans residues 333-350; it reads YTHLGSKGKDLSMPMKFT. A helical transmembrane segment spans residues 351–371; that stretch reads LGMFMCSLGFLTAAAAGMWFA. At 372–380 the chain is on the periplasmic side; sequence DAQGLTSPW. A helical membrane pass occupies residues 381-401; it reads FIVLVYLFQSLGELFISALGL. At 402–411 the chain is on the cytoplasmic side; it reads AMVAALVPQH. A helical membrane pass occupies residues 412 to 432; sequence LMGFILGISFLTQAAAFLLGG. Residues 433 to 456 are Periplasmic-facing; sequence YVATFTAVPDNITDPLETLPVYTN. The helical transmembrane segment at 457–477 threads the bilayer; the sequence is VFGKIGLVTLGVAVVMLLMVP. Residues 478–489 lie on the Cytoplasmic side of the membrane; that stretch reads WLKRMIAAPESH.

The protein belongs to the major facilitator superfamily. Proton-dependent oligopeptide transporter (POT/PTR) (TC 2.A.17) family. DtpB subfamily.

The protein localises to the cell inner membrane. Proton-dependent permease that transports di- and tripeptides. The sequence is that of Dipeptide and tripeptide permease B from Shigella dysenteriae serotype 1 (strain Sd197).